The following is a 338-amino-acid chain: Tryptophan--tRNA ligase (338 aa).

ATP is bound by residues 18–20 (QPS) and 26–27 (GN). The short motif at 19-27 (PSGNLTIGN) is the 'HIGH' region element. Residue Asp142 coordinates L-tryptophan. ATP-binding positions include 154–156 (GND), Ile193, and 202–206 (KMSKS). Positions 202–206 (KMSKS) match the 'KMSKS' region motif.

It belongs to the class-I aminoacyl-tRNA synthetase family. In terms of assembly, homodimer.

The protein localises to the cytoplasm. It carries out the reaction tRNA(Trp) + L-tryptophan + ATP = L-tryptophyl-tRNA(Trp) + AMP + diphosphate + H(+). In terms of biological role, catalyzes the attachment of tryptophan to tRNA(Trp). The chain is Tryptophan--tRNA ligase from Clostridium tetani (strain Massachusetts / E88).